We begin with the raw amino-acid sequence, 341 residues long: Phosphoribosylformylglycinamidine cyclo-ligase (341 aa).

Belongs to the AIR synthase family.

It is found in the cytoplasm. The enzyme catalyses 2-formamido-N(1)-(5-O-phospho-beta-D-ribosyl)acetamidine + ATP = 5-amino-1-(5-phospho-beta-D-ribosyl)imidazole + ADP + phosphate + H(+). It functions in the pathway purine metabolism; IMP biosynthesis via de novo pathway; 5-amino-1-(5-phospho-D-ribosyl)imidazole from N(2)-formyl-N(1)-(5-phospho-D-ribosyl)glycinamide: step 2/2. The polypeptide is Phosphoribosylformylglycinamidine cyclo-ligase (Xanthomonas campestris pv. campestris (strain 8004)).